The following is a 389-amino-acid chain: ATP phosphoribosyltransferase regulatory subunit (389 aa).

The protein belongs to the class-II aminoacyl-tRNA synthetase family. HisZ subfamily. Heteromultimer composed of HisG and HisZ subunits.

The protein localises to the cytoplasm. Its pathway is amino-acid biosynthesis; L-histidine biosynthesis; L-histidine from 5-phospho-alpha-D-ribose 1-diphosphate: step 1/9. Functionally, required for the first step of histidine biosynthesis. May allow the feedback regulation of ATP phosphoribosyltransferase activity by histidine. The protein is ATP phosphoribosyltransferase regulatory subunit of Hydrogenovibrio crunogenus (strain DSM 25203 / XCL-2) (Thiomicrospira crunogena).